A 248-amino-acid chain; its full sequence is Prepilin leader peptidase/N-methyltransferase (248 aa).

The helical transmembrane segment at 1-21 (MLSILFIFGLILGSFYYTAGC) threads the bilayer. Residues C36, C39, C61, and C64 each coordinate Zn(2+). Transmembrane regions (helical) follow at residues 68-88 (ISFM…AAGI), 90-110 (FGIS…IIVA), 114-134 (IHFM…LAAA), 143-163 (WYAG…IAAI), 178-198 (VIGF…SVLI), and 223-243 (AIAA…SFYI).

Belongs to the peptidase A24 family. The cofactor is Zn(2+).

The protein localises to the cell membrane. The enzyme catalyses Typically cleaves a -Gly-|-Phe- bond to release an N-terminal, basic peptide of 5-8 residues from type IV prepilin, and then N-methylates the new N-terminal amino group, the methyl donor being S-adenosyl-L-methionine.. In terms of biological role, plays a role in type II pseudopili formation by proteolytically removing the leader sequence from substrate proteins and subsequently monomethylating the alpha-amino group of the newly exposed N-terminal phenylalanine. Substrates include proteins required for biogenesis of the type II general secretory apparatus. This Bacillus subtilis (strain 168) protein is Prepilin leader peptidase/N-methyltransferase (comC).